The following is a 494-amino-acid chain: Sulfate adenylyltransferase subunit 1 (494 aa).

Positions 24 to 240 (TRPLRLITCG…LELATVRSAQ (217 aa)) constitute a tr-type G domain. The G1 stretch occupies residues 33-40 (GSVDDGKS). A GTP-binding site is contributed by 33-40 (GSVDDGKS). Positions 91 to 95 (GITID) are G2. Residues 112-115 (DTPG) form a G3 region. Residues 112–116 (DTPGH) and 167–170 (NKID) contribute to the GTP site. The tract at residues 167 to 170 (NKID) is G4. The segment at 204-206 (SAL) is G5.

It belongs to the TRAFAC class translation factor GTPase superfamily. Classic translation factor GTPase family. CysN/NodQ subfamily. Heterodimer composed of CysD, the smaller subunit, and CysN.

The catalysed reaction is sulfate + ATP + H(+) = adenosine 5'-phosphosulfate + diphosphate. Its pathway is sulfur metabolism; hydrogen sulfide biosynthesis; sulfite from sulfate: step 1/3. Its function is as follows. With CysD forms the ATP sulfurylase (ATPS) that catalyzes the adenylation of sulfate producing adenosine 5'-phosphosulfate (APS) and diphosphate, the first enzymatic step in sulfur assimilation pathway. APS synthesis involves the formation of a high-energy phosphoric-sulfuric acid anhydride bond driven by GTP hydrolysis by CysN coupled to ATP hydrolysis by CysD. The sequence is that of Sulfate adenylyltransferase subunit 1 from Rhizobium tropici.